The chain runs to 252 residues: D-aminoacyl-tRNA deacylase (252 aa).

Belongs to the DtdA deacylase family. In terms of assembly, monomer. It depends on Zn(2+) as a cofactor.

It catalyses the reaction a D-aminoacyl-tRNA + H2O = a tRNA + a D-alpha-amino acid + H(+). It carries out the reaction glycyl-tRNA(Ala) + H2O = tRNA(Ala) + glycine + H(+). D-aminoacyl-tRNA deacylase with broad substrate specificity. By recycling D-aminoacyl-tRNA to D-amino acids and free tRNA molecules, this enzyme counteracts the toxicity associated with the formation of D-aminoacyl-tRNA entities in vivo. This is D-aminoacyl-tRNA deacylase from Pyrobaculum islandicum (strain DSM 4184 / JCM 9189 / GEO3).